Here is a 328-residue protein sequence, read N- to C-terminus: MKSNRIFISWLRWPLFIRIGVIILCLILLFGQIIYILEPKQFTSVFEGIWWAVVTVSTVGYGDYVPHTPLGQAAGILLILSGASFVTAYFATLSAAAFSRQHRYIEGKVAYKGRDHIILIGWNEKTNRLLKDLQLAAPSKTVVLIDESLTEGPLIENVHFIRGHAADDGTLKRANITEAESVMITADQYKSETDADMLSVLTLLSVKGLNPLAYCIVEILTDRFVTNAERAGANQIIGTSEFISRAMLQHYQVKLRPSKQQNGIKLTLDQHVELLAVPDELKGAAYKTCVLYFLDHNTTIIGIQKKEGPMLSPPLTYKVLETDQFLAI.

The next 3 membrane-spanning stretches (helical) occupy residues 19–39, 42–62, and 73–93; these read IGVIILCLILLFGQIIYILEP, FTSVFEGIWWAVVTVSTVGYG, and AAGILLILSGASFVTAYFATL. One can recognise an RCK N-terminal domain in the interval 114–238; the sequence is RDHIILIGWN…ERAGANQIIG (125 aa).

It is found in the cell membrane. The polypeptide is Putative potassium channel protein YugO (yugO) (Bacillus subtilis (strain 168)).